We begin with the raw amino-acid sequence, 304 residues long: MNRKGNLSMTTQLQHLTLPEDIQQKLLSYKEQPISPEFQSLIGTSGYEAEDEAILFDAIIALAMGKNVLLKGPTGSGKTKLAETLSSYFHKPMHSVNCSVDLDAEALVGYKTIENQSGQATIEFVSGPVTKAMKEGHFLYIDEINMAKPETLPILNGVLDYRKMMTNPFTGEVIRAKSGFGVIAAINEGYVGTVPLNEALKNRFVIIDVPYIKGELLKQVLMSQSALKDEKLIDRFITLSSDLIVQANNGQVSEEAASIRALIDTCDLAAYIPPRRAIERGIVEKLDDDREKAAVRNIAETLFE.

Glycine 72–threonine 79 is an ATP binding site.

Belongs to the CbbQ/NirQ/NorQ/GpvN family.

This is an uncharacterized protein from Bacillus subtilis (strain 168).